We begin with the raw amino-acid sequence, 448 residues long: Protein TraN (448 aa).

2 disordered regions span residues 243-273 (NRVGASRTATTARAGQQQSPAVKQSSGNSGE) and 411-448 (EAARRHQALMRKQEQEKKQAQERERGRSQSLGLSNKPS). A compositionally biased stretch (low complexity) spans 246 to 261 (GASRTATTARAGQQQS). Residues 262–271 (PAVKQSSGNS) show a composition bias toward polar residues. Residues 421–437 (RKQEQEKKQAQERERGR) show a composition bias toward basic and acidic residues. A compositionally biased stretch (polar residues) spans 438–448 (SQSLGLSNKPS).

The protein to H.influenzae HI_1407.

This Escherichia coli protein is Protein TraN (traN).